The sequence spans 637 residues: Acyl-CoA ligase cm3C (637 aa).

ATP is bound by residues 282 to 290 (TSGTSGRQK), 423 to 428 (HAWGLT), Asp-507, Arg-526, and Lys-624. The tract at residues 353 to 423 (DMQRMLGSVA…SLQPSWEFLH (71 aa)) is SBD1. The tract at residues 424–486 (AWGLTETCIV…YKAPNMFVGY (63 aa)) is SBD2.

The protein belongs to the ATP-dependent AMP-binding enzyme family.

It functions in the pathway secondary metabolite biosynthesis. Its function is as follows. Acyl-CoA ligase; part of the gene cluster that mediates the biosynthesis of beauveriolides I and III, cyclodepsipeptides acting as inhibitors of the acyl-CoA:cholesterol acyltransferase. The HR-PKS cm3B initiates the biosynthesis of beauveriolides by iteratively catalyzing the formation of the linear polyketide chain. The ATP-dependent acetyl-CoA ligase cm3D converts the polyketide carboxylic acid to a CoA thioester which id shuttled to the first T domain in the NRPS cm3A by the acetyltransferase cm3C. Cm3A contains 13 domains and assembles the polyketide chain, L-phenylalanine, L-alanine, and D-leucine (or D-allo-isoleucine) to form beauveriolide I (or beauveriolide III). The production of both beauveriolides I and III suggests the substrate adaptability of cm3B, using different amino acids as substrates. This chain is Acyl-CoA ligase cm3C, found in Cordyceps militaris (strain CM01) (Caterpillar fungus).